A 175-amino-acid polypeptide reads, in one-letter code: Shikimate kinase (175 aa).

Residue Gly-12 to Ser-19 coordinates ATP.

The protein belongs to the shikimate kinase family.

It localises to the cytoplasm. It catalyses the reaction shikimate + ATP = 3-phosphoshikimate + ADP + H(+). It participates in metabolic intermediate biosynthesis; chorismate biosynthesis; chorismate from D-erythrose 4-phosphate and phosphoenolpyruvate: step 5/7. This chain is Shikimate kinase, found in Nitratidesulfovibrio vulgaris (strain ATCC 29579 / DSM 644 / CCUG 34227 / NCIMB 8303 / VKM B-1760 / Hildenborough) (Desulfovibrio vulgaris).